The chain runs to 884 residues: Probable inorganic carbon transporter subunit DabA (884 aa).

Zn(2+)-binding residues include C390, D392, H582, and C597.

It belongs to the inorganic carbon transporter (TC 9.A.2) DabA family. Forms a complex with DabB. Zn(2+) is required as a cofactor.

It is found in the cell membrane. Part of an energy-coupled inorganic carbon pump. The protein is Probable inorganic carbon transporter subunit DabA of Staphylococcus saprophyticus subsp. saprophyticus (strain ATCC 15305 / DSM 20229 / NCIMB 8711 / NCTC 7292 / S-41).